The following is a 52-amino-acid chain: Rubredoxin (52 aa).

The 51-residue stretch at 1–51 folds into the Rubredoxin-like domain; it reads MDKYECSICGYIYDEAEGDDGNVAAGTKFADLPADWVCPTCGADKDAFVKM. Positions 6, 9, 38, and 41 each coordinate Fe cation.

The protein belongs to the rubredoxin family. It depends on Fe(3+) as a cofactor.

Its function is as follows. Rubredoxin is a small nonheme, iron protein lacking acid-labile sulfide. Its single Fe, chelated to 4 Cys, functions as an electron acceptor and may also stabilize the conformation of the molecule. This Megasphaera elsdenii protein is Rubredoxin.